A 188-amino-acid polypeptide reads, in one-letter code: V-type ATP synthase subunit E (188 aa).

The protein belongs to the V-ATPase E subunit family.

In terms of biological role, produces ATP from ADP in the presence of a proton gradient across the membrane. This chain is V-type ATP synthase subunit E, found in Thermus thermophilus (strain ATCC BAA-163 / DSM 7039 / HB27).